We begin with the raw amino-acid sequence, 676 residues long: RNA helicase NPH-II (676 aa).

The Helicase ATP-binding domain maps to 172–347 (FLAWISHRPV…IFLPNPAFIH (176 aa)). 185-192 (GGTGVGKT) is an ATP binding site. The DEXH box signature appears at 296-299 (DEVH). Residues 366–535 (NPSSRMAYIE…NYILYANKFN (170 aa)) enclose the Helicase C-terminal domain.

This sequence belongs to the DEAD box helicase family. DEAH subfamily. Monomer.

It is found in the virion. It carries out the reaction ATP + H2O = ADP + phosphate + H(+). In terms of biological role, NTP-dependent helicase that catalyzes unidirectional unwinding of 3'tailed duplex RNAs and plays an important role during transcription of early mRNAs, presumably by preventing R-loop formation behind the elongating RNA polymerase. Might also play a role in the export of newly synthesized mRNA chains out of the core into the cytoplasm. Required for replication and propagation of viral particles. The chain is RNA helicase NPH-II (OPG084) from Monkeypox virus.